The primary structure comprises 491 residues: F-box/LRR-repeat protein 7 (491 aa).

Positions 1–79 (MGANNGKQYG…GRGSSTSSSS (79 aa)) are disordered. The span at 16-26 (SSSVSSDVSSS) shows a compositional bias: low complexity. Over residues 27 to 55 (TDHTPTKAQRNVATSEDSDLSMRTLSTPS) the composition is skewed to polar residues. The 47-residue stretch at 111–157 (QASIDRLPDHSMVQIFSFLPTNQLCRCARVCRRWYNLAWDPRLWRTI) folds into the F-box domain. LRR repeat units follow at residues 185–210 (CLML…IAQC), 211–236 (CPEL…VVSL), 237–262 (CPNL…EASI), 271–296 (QISI…IAAH), 297–322 (CTQL…LVIY), 323–348 (CTSI…IAKL), 349–374 (ESRL…VAKY), 375–400 (CSKL…LAKN), 401–426 (CTKL…LALN), and 427–452 (CFNL…VAAN).

Belongs to the FBXL7 family. As to quaternary structure, part of the SCF (SKP1-CUL1-F-box) E3 ubiquitin-protein ligase complex SCF(FBXL7) composed of CUL1, SKP1, RBX1 and FBXL7. Interacts with AURKA; interaction takes place during mitosis but not in interphase. Interacts with BIRC5; this interaction allows BIRC5 to be polyubiquitinated by the SCF(FBXL7) E3 ubiquitin-protein ligase complex.

The protein localises to the cytoplasm. Its subcellular location is the cytoskeleton. The protein resides in the microtubule organizing center. It is found in the centrosome. It participates in protein modification; protein ubiquitination. Its function is as follows. Substrate recognition component of a SCF (SKP1-CUL1-F-box protein) E3 ubiquitin-protein ligase complex. During mitosis, it mediates the ubiquitination and subsequent proteasomal degradation of AURKA, causing mitotic arrest. It also regulates mitochondrial function by mediating the ubiquitination and proteasomal degradation of the apoptosis inhibitor BIRC5. The protein is F-box/LRR-repeat protein 7 (Fbxl7) of Mus musculus (Mouse).